Here is a 319-residue protein sequence, read N- to C-terminus: MLALDARAEVDRIVDTLRKQVLGTLRRRGVVVGLSGGIDSSVVATLCTRAFGKDKVLGLFMPERDSSGDSLRLGRRVAAQLGIENILEDIGPAVEAVGAYRRQLEAIRTVVPDYGDGWKCKLVIEPVLESNGLNITRLTVQDPEGKVDTVRLSPAAYLQIVAATNYKQRLRKMTEYYHADRLKYAVAGTPNRLEYDQGFFVKQGDGTADVMPIVHLYKTQVYQLAEYLGVDEEIRQRPPTTDTFSMAQSQEEFYFALPYHLMDLCLYGLNHGIASDEVAAVAGLTEPQLQKVYKDIDAKRRAAHYLHARPLLSVEIGED.

Residue 33-40 (GLSGGIDS) coordinates ATP. Position 39 (aspartate 39) interacts with Mg(2+). Arginine 169 is a binding site for deamido-NAD(+). Threonine 189 is an ATP binding site. Glutamate 194 lines the Mg(2+) pocket. 2 residues coordinate deamido-NAD(+): lysine 202 and aspartate 209. ATP-binding residues include lysine 218 and threonine 240.

It belongs to the NAD synthetase family. In terms of assembly, homodimer.

It catalyses the reaction deamido-NAD(+) + NH4(+) + ATP = AMP + diphosphate + NAD(+) + H(+). It functions in the pathway cofactor biosynthesis; NAD(+) biosynthesis; NAD(+) from deamido-NAD(+) (ammonia route): step 1/1. Functionally, catalyzes the ATP-dependent amidation of deamido-NAD to form NAD. Uses ammonia as a nitrogen source. The protein is NH(3)-dependent NAD(+) synthetase of Mesorhizobium japonicum (strain LMG 29417 / CECT 9101 / MAFF 303099) (Mesorhizobium loti (strain MAFF 303099)).